Consider the following 692-residue polypeptide: Chaperone protein dnaK1 (692 aa).

T197 carries the phosphothreonine; by autocatalysis modification.

Belongs to the heat shock protein 70 family.

In terms of biological role, acts as a chaperone. The protein is Chaperone protein dnaK1 (dnaK1) of Synechocystis sp. (strain ATCC 27184 / PCC 6803 / Kazusa).